A 236-amino-acid polypeptide reads, in one-letter code: Ubiquinone biosynthesis O-methyltransferase (236 aa).

4 residues coordinate S-adenosyl-L-methionine: Arg-36, Gly-60, Asp-81, and Leu-123.

It belongs to the methyltransferase superfamily. UbiG/COQ3 family.

It carries out the reaction a 3-demethylubiquinol + S-adenosyl-L-methionine = a ubiquinol + S-adenosyl-L-homocysteine + H(+). The catalysed reaction is a 3-(all-trans-polyprenyl)benzene-1,2-diol + S-adenosyl-L-methionine = a 2-methoxy-6-(all-trans-polyprenyl)phenol + S-adenosyl-L-homocysteine + H(+). Its pathway is cofactor biosynthesis; ubiquinone biosynthesis. O-methyltransferase that catalyzes the 2 O-methylation steps in the ubiquinone biosynthetic pathway. The protein is Ubiquinone biosynthesis O-methyltransferase of Rickettsia canadensis (strain McKiel).